Reading from the N-terminus, the 88-residue chain is MALKERIGTVVSDKMDKTVVVAVINRYPHPTYKKIVSKTTRYKAHDPENSCAMGDRVKIKETRPLSAHKRWAIEEILNKTIKNKEDKK.

This sequence belongs to the universal ribosomal protein uS17 family. Part of the 30S ribosomal subunit.

One of the primary rRNA binding proteins, it binds specifically to the 5'-end of 16S ribosomal RNA. The sequence is that of Small ribosomal subunit protein uS17 from Prochlorococcus marinus (strain MIT 9515).